Here is a 434-residue protein sequence, read N- to C-terminus: MSIITDVYAREVLDSRGNPTLEVEVYTESGAFGRGMVPSGASTGEHEAVELRDGDKARYGGLGTQKAVDNVNNVIAEHIIGFDVRDQQGIDRAMIALDGTPNKGKLGANAILGVSIAVARAAADYLEVPLYSYLGGFNTKVLPTPMMNIINGGSHSDAPIAFQEFMIVPAGAPTFKEALRWGAEIFHALKKILKERGLETAVGDEGGFAPRFDGTEDGVETIIKAIEAAGYVPGKDVFIGLDCASSEFYDAERKVYDYTKFEGEGAAVRTAAEQIDYLEELVNKYPIITIEDGMDENDWDGWKALTERLGDKVQLVGDDFFVTNTAYLEKGIAEHAANSILIKVNQIGTLTETFDAIEMAKEAGYTAVVSHRSGETEDSTIADIAVATNAGQIKTGSLSRTDRIAKYNQLLRIEDQLGEVAEYRGLKSFYNLKK.

Position 163 (Q163) interacts with (2R)-2-phosphoglycerate. The active-site Proton donor is the E205. The Mg(2+) site is built by D242, E291, and D318. (2R)-2-phosphoglycerate is bound by residues K343, R372, S373, and K394. The active-site Proton acceptor is K343.

This sequence belongs to the enolase family. Requires Mg(2+) as cofactor.

The protein resides in the cytoplasm. It localises to the secreted. The protein localises to the cell surface. The catalysed reaction is (2R)-2-phosphoglycerate = phosphoenolpyruvate + H2O. It participates in carbohydrate degradation; glycolysis; pyruvate from D-glyceraldehyde 3-phosphate: step 4/5. Catalyzes the reversible conversion of 2-phosphoglycerate (2-PG) into phosphoenolpyruvate (PEP). It is essential for the degradation of carbohydrates via glycolysis. The protein is Enolase of Streptococcus thermophilus (strain CNRZ 1066).